A 238-amino-acid chain; its full sequence is Ribonuclease PH (238 aa).

Residues arginine 86 and 124-126 (GTR) contribute to the phosphate site.

This sequence belongs to the RNase PH family. Homohexameric ring arranged as a trimer of dimers.

The enzyme catalyses tRNA(n+1) + phosphate = tRNA(n) + a ribonucleoside 5'-diphosphate. In terms of biological role, phosphorolytic 3'-5' exoribonuclease that plays an important role in tRNA 3'-end maturation. Removes nucleotide residues following the 3'-CCA terminus of tRNAs; can also add nucleotides to the ends of RNA molecules by using nucleoside diphosphates as substrates, but this may not be physiologically important. Probably plays a role in initiation of 16S rRNA degradation (leading to ribosome degradation) during starvation. The polypeptide is Ribonuclease PH (Geobacter sulfurreducens (strain ATCC 51573 / DSM 12127 / PCA)).